We begin with the raw amino-acid sequence, 133 residues long: MSFQVRIIAPNGIIWDSEAEEIILSTNTGKIGVLTNHTSLLTGLDIGTIRIRALNNQWNTLALMSGFAVIKDNVATIIVSEAENGANIKSEEAQTQLEEAKSYFNTAKGTKNEVEANLAVKRAETRLKASQNL.

The protein belongs to the ATPase epsilon chain family. In terms of assembly, F-type ATPases have 2 components, CF(1) - the catalytic core - and CF(0) - the membrane proton channel. CF(1) has five subunits: alpha(3), beta(3), gamma(1), delta(1), epsilon(1). CF(0) has three main subunits: a, b and c.

It is found in the plastid. The protein resides in the chloroplast thylakoid membrane. Its function is as follows. Produces ATP from ADP in the presence of a proton gradient across the membrane. The protein is ATP synthase epsilon chain, chloroplastic of Mesostigma viride (Green alga).